The primary structure comprises 332 residues: UDP-3-O-acylglucosamine N-acyltransferase (332 aa).

The Proton acceptor role is filled by His231.

The protein belongs to the transferase hexapeptide repeat family. LpxD subfamily. As to quaternary structure, homotrimer.

The catalysed reaction is a UDP-3-O-[(3R)-3-hydroxyacyl]-alpha-D-glucosamine + a (3R)-hydroxyacyl-[ACP] = a UDP-2-N,3-O-bis[(3R)-3-hydroxyacyl]-alpha-D-glucosamine + holo-[ACP] + H(+). Its pathway is bacterial outer membrane biogenesis; LPS lipid A biosynthesis. Catalyzes the N-acylation of UDP-3-O-acylglucosamine using 3-hydroxyacyl-ACP as the acyl donor. Is involved in the biosynthesis of lipid A, a phosphorylated glycolipid that anchors the lipopolysaccharide to the outer membrane of the cell. In Vesicomyosocius okutanii subsp. Calyptogena okutanii (strain HA), this protein is UDP-3-O-acylglucosamine N-acyltransferase.